The chain runs to 60 residues: Cytotoxin 7 (60 aa).

4 disulfide bridges follow: cysteine 3–cysteine 21, cysteine 14–cysteine 38, cysteine 42–cysteine 53, and cysteine 54–cysteine 59.

This sequence belongs to the three-finger toxin family. Short-chain subfamily. Type IA cytotoxin sub-subfamily. In terms of assembly, monomer in solution; Homodimer and oligomer in the presence of negatively charged lipids forming a pore with a size ranging between 20 and 30 Angstroms. Expressed by the venom gland.

It localises to the secreted. It is found in the target cell membrane. Its function is as follows. Shows cytolytic activity on many different cells by forming pore in lipid membranes. In vivo, increases heart rate or kills the animal by cardiac arrest. In addition, it binds to heparin with high affinity, interacts with Kv channel-interacting protein 1 (KCNIP1) in a calcium-independent manner, and binds to integrin alpha-V/beta-3 (ITGAV/ITGB3) with moderate affinity. Preferentially binds acidic phospholipids like phosphatidylserine, phosphatidic acid and phosphatidyl glycerol. Has hemolytic activity towards human erythrocytes (EC(50)=0.171 uM) and cytolytic activity towards various cell lines. The polypeptide is Cytotoxin 7 (Naja naja (Indian cobra)).